We begin with the raw amino-acid sequence, 930 residues long: Protocadherin gamma-A4 (930 aa).

The first 27 residues, 1 to 27 (MAAPYKSDRRGLIWICIFLGSLCDIRA), serve as a signal peptide directing secretion. Cadherin domains are found at residues 28–132 (EQIR…APSF), 133–241 (GAQQ…APVF), 242–346 (TQPE…APEV), 347–451 (TVTS…PPTF), 452–561 (THAS…TPEI), and 569–682 (DGST…APID). The Extracellular segment spans residues 28–691 (EQIRYSVPEE…DQEDSDITLY (664 aa)). Residues asparagine 418 and asparagine 544 are each glycosylated (N-linked (GlcNAc...) asparagine). The helical transmembrane segment at 692 to 712 (LVVAVAAVSCVFLAFVIVLLI) threads the bilayer. The Cytoplasmic segment spans residues 713-930 (HRLRRWHSTR…KKKSGKKEKK (218 aa)). 2 disordered regions span residues 803-839 (SSLQQAPPNTDWRFSQAQRPGTSGSQNGDETGTWPNN) and 900-930 (ATLTNAAGKRDGKAPAGGNGNKKKSGKKEKK). Residues 920–930 (NKKKSGKKEKK) are compositionally biased toward basic residues.

It is found in the cell membrane. Functionally, potential calcium-dependent cell-adhesion protein. May be involved in the establishment and maintenance of specific neuronal connections in the brain. The chain is Protocadherin gamma-A4 from Mus musculus (Mouse).